The sequence spans 398 residues: Protein ELC (398 aa).

Residues 18 to 162 form the UEV domain; that stretch reads ALSQRGPSSV…ARDPPLYSRR (145 aa). Positions 157–202 are disordered; that stretch reads PLYSRRRPQPPPPSPPTVYDSSLSRPPSADQSLPRPFPPSPYGGGV. A compositionally biased stretch (polar residues) spans 175–187; that stretch reads YDSSLSRPPSADQ. A coiled-coil region spans residues 247 to 291; it reads EAEAEELLSLQAGLKRREDELNIGLKEMVEEKETLEQQLQIISMN. In terms of domain architecture, SB spans 322–390; the sequence is DTLSKQMLEC…RAAQMEVQVA (69 aa).

The protein belongs to the ubiquitin-conjugating enzyme family. UEV subfamily. Component of the endosomal sorting required for transport complex I (ESCRT-I), composed of ELC, VPS28 and VPS37. Interacts with VPS28 and VPS37. Binds ubiquitin in vitro. Interacts with FREE1. Interacts with TOL9/TOM1D. Interacts with BRO1/ALIX. Interacts with SINAT1, SINAT2, SINAT3 and SINAT4. Ubiquitinated by SINAT1, SINAT2, SINAT3 and SINAT4 for subsequent proteasomal degradation. Expressed in roots, stems, leaves and flowers.

It localises to the early endosome. Its subcellular location is the late endosome. It is found in the prevacuolar compartment. In terms of biological role, component of the ESCRT-I complex (endosomal sorting complex required for transport I), a regulator of vesicular trafficking process. Required for the sorting of endocytic ubiquitinated cargos into multivesicular bodies (MVBs). May control nuclear division through the microtubule cytoskeleton. This is Protein ELC from Arabidopsis thaliana (Mouse-ear cress).